The primary structure comprises 215 residues: Thymidylate kinase (215 aa).

7-14 provides a ligand contact to ATP; it reads GLDGSGKT.

This sequence belongs to the thymidylate kinase family.

It carries out the reaction dTMP + ATP = dTDP + ADP. Functionally, phosphorylation of dTMP to form dTDP in both de novo and salvage pathways of dTTP synthesis. This is Thymidylate kinase from Mycoplasmopsis agalactiae (strain NCTC 10123 / CIP 59.7 / PG2) (Mycoplasma agalactiae).